Reading from the N-terminus, the 460-residue chain is tRNA modification GTPase MnmE (460 aa).

Residues arginine 24, glutamate 81, and lysine 121 each coordinate (6S)-5-formyl-5,6,7,8-tetrahydrofolate. Positions 218–385 (GMVVAIAGPP…LIAAIEDFAA (168 aa)) constitute a TrmE-type G domain. GTP-binding positions include 228–233 (NVGKST), 247–253 (SPHAGTT), and 272–275 (DTAG). Mg(2+) is bound by residues serine 232 and threonine 253. Lysine 460 is a (6S)-5-formyl-5,6,7,8-tetrahydrofolate binding site.

It belongs to the TRAFAC class TrmE-Era-EngA-EngB-Septin-like GTPase superfamily. TrmE GTPase family. As to quaternary structure, homodimer. Heterotetramer of two MnmE and two MnmG subunits. K(+) serves as cofactor.

The protein resides in the cytoplasm. Exhibits a very high intrinsic GTPase hydrolysis rate. Involved in the addition of a carboxymethylaminomethyl (cmnm) group at the wobble position (U34) of certain tRNAs, forming tRNA-cmnm(5)s(2)U34. This chain is tRNA modification GTPase MnmE, found in Rhodopseudomonas palustris (strain BisB5).